A 434-amino-acid polypeptide reads, in one-letter code: Methylenetetrahydrofolate--tRNA-(uracil-5-)-methyltransferase TrmFO (434 aa).

10 to 15 provides a ligand contact to FAD; the sequence is GAGLAG.

The protein belongs to the MnmG family. TrmFO subfamily. FAD is required as a cofactor.

The protein resides in the cytoplasm. The catalysed reaction is uridine(54) in tRNA + (6R)-5,10-methylene-5,6,7,8-tetrahydrofolate + NADH + H(+) = 5-methyluridine(54) in tRNA + (6S)-5,6,7,8-tetrahydrofolate + NAD(+). The enzyme catalyses uridine(54) in tRNA + (6R)-5,10-methylene-5,6,7,8-tetrahydrofolate + NADPH + H(+) = 5-methyluridine(54) in tRNA + (6S)-5,6,7,8-tetrahydrofolate + NADP(+). Functionally, catalyzes the folate-dependent formation of 5-methyl-uridine at position 54 (M-5-U54) in all tRNAs. The sequence is that of Methylenetetrahydrofolate--tRNA-(uracil-5-)-methyltransferase TrmFO from Bacillus anthracis (strain A0248).